The primary structure comprises 110 residues: UPF0060 membrane protein Mfla_2554 (110 aa).

The next 4 helical transmembrane spans lie at 7-27 (VALF…PYLW), 33-53 (SPLL…LLTL), 61-81 (VYAA…WVVD), and 83-103 (IIPS…MAII).

This sequence belongs to the UPF0060 family.

It localises to the cell inner membrane. The polypeptide is UPF0060 membrane protein Mfla_2554 (Methylobacillus flagellatus (strain ATCC 51484 / DSM 6875 / VKM B-1610 / KT)).